A 270-amino-acid chain; its full sequence is MWNSGFESYGSSSYGGAGGYTQSPGGFGSPAPSQAEKKSRARAQHIVPCTISQLLSATLVDEVFRIGNVEISQVTIVGIIRHAEKAPTNIVYKIDDMTAAPMDVRQWVDTDDASSENTVVPPETYVKVAGHLRSFQNKKSLVAFKIMPLEDMNEFTTHILEVINAHMVLSKANSQPSAGRAPISNPGMSEAGNFGGNSFMPANGLTVAQNQVLNLIKACPRPEGLNFQDLKNQLKHMSVSSVKQAMDFLSNEGHIYSTVDDDHFKSTDAE.

N-acetylmethionine is present on M1. A phosphoserine; by PRKDC mark is found at S4 and S8. Residue T21 is modified to Phosphothreonine; by PRKDC. The disordered stretch occupies residues T21–R40. S23 carries the post-translational modification Phosphoserine; by CDK2. Position 29 is a phosphoserine; by CDK1 (S29). Phosphoserine; by PRKDC is present on S33. Residues K37 and K38 each participate in a glycyl lysine isopeptide (Lys-Gly) (interchain with G-Cter in ubiquitin) cross-link. The segment at residues V74–P148 is a DNA-binding region (OB). The interval G187–E270 is interaction with RAD52, TIPIN, UNG and XPA.

Belongs to the replication factor A protein 2 family. In terms of assembly, component of the replication protein A complex (RPA/RP-A), a heterotrimeric complex composed of RPA1, RPA2 and RPA3. Interacts with PRPF19; the PRP19-CDC5L complex is recruited to the sites of DNA repair where it ubiquitinates the replication protein A complex (RPA). Interacts with SERTAD3. Interacts with TIPIN. Interacts with TIMELESS. Interacts with PPP4R2; the interaction is direct, DNA damage-dependent and mediates the recruitment of the PP4 catalytic subunit PPP4C. Interacts (hyperphosphorylated) with RAD51. Interacts with SMARCAL1; the interaction is direct and mediates the recruitment to the RPA complex of SMARCAL1. Interacts with RAD52 and XPA; those interactions are direct and associate RAD52 and XPA to the RPA complex. Interacts with FBH1. Interacts with ETAA1; the interaction is direct and promotes ETAA1 recruitment at stalled replication forks. Interacts with DDI2. Interacts (in unphosphorylated form via N-terminus) with EIF4EBP3; the interaction enhances EIF4EBP3-mediated inhibition of EIF4E-mediated mRNA nuclear export. Differentially phosphorylated throughout the cell cycle, becoming phosphorylated at the G1-S transition and dephosphorylated in late mitosis. Mainly phosphorylated at Ser-23 and Ser-29, by cyclin A-CDK2 and cyclin B-CDK1, respectively during DNA replication and mitosis. Dephosphorylation may require the serine/threonine-protein phosphatase 4. Phosphorylation at Ser-23 and Ser-29 is a prerequisite for further phosphorylation. Becomes hyperphosphorylated on additional residues including Ser-4, Ser-8, Thr-21 and Ser-33 in response to DNA damage. Hyperphosphorylation is mediated by ATM, ATR and PRKDC. Primarily recruited to DNA repair nuclear foci as a hypophosphorylated form it undergoes subsequent hyperphosphorylation, catalyzed by ATR. Hyperphosphorylation is required for RAD51 recruitment to chromatin and efficient DNA repair. Phosphorylation at Thr-21 depends upon RFWD3 presence. Post-translationally, DNA damage-induced 'Lys-63'-linked polyubiquitination by PRPF19 mediates ATRIP recruitment to the RPA complex at sites of DNA damage and activation of ATR. Ubiquitinated by RFWD3 at stalled replication forks in response to DNA damage: ubiquitination by RFWD3 does not lead to degradation by the proteasome and promotes removal of the RPA complex from stalled replication forks, promoting homologous recombination.

The protein resides in the nucleus. It is found in the PML body. Its function is as follows. As part of the heterotrimeric replication protein A complex (RPA/RP-A), binds and stabilizes single-stranded DNA intermediates, that form during DNA replication or upon DNA stress. It prevents their reannealing and in parallel, recruits and activates different proteins and complexes involved in DNA metabolism. Thereby, it plays an essential role both in DNA replication and the cellular response to DNA damage. In the cellular response to DNA damage, the RPA complex controls DNA repair and DNA damage checkpoint activation. Through recruitment of ATRIP activates the ATR kinase a master regulator of the DNA damage response. It is required for the recruitment of the DNA double-strand break repair factors RAD51 and RAD52 to chromatin in response to DNA damage. Also recruits to sites of DNA damage proteins like XPA and XPG that are involved in nucleotide excision repair and is required for this mechanism of DNA repair. Also plays a role in base excision repair (BER) probably through interaction with UNG. Also recruits SMARCAL1/HARP, which is involved in replication fork restart, to sites of DNA damage. May also play a role in telomere maintenance. The polypeptide is Replication protein A 32 kDa subunit (RPA2) (Pongo abelii (Sumatran orangutan)).